The sequence spans 158 residues: Large ribosomal subunit protein uL15 (158 aa).

It belongs to the universal ribosomal protein uL15 family. As to quaternary structure, part of the 50S ribosomal subunit.

Functionally, binds to the 23S rRNA. In Aeropyrum pernix (strain ATCC 700893 / DSM 11879 / JCM 9820 / NBRC 100138 / K1), this protein is Large ribosomal subunit protein uL15.